The sequence spans 761 residues: BMP/retinoic acid-inducible neural-specific protein 1 (761 aa).

The signal sequence occupies residues M1–S19. The region spanning R68–M251 is the MACPF domain. 7 N-linked (GlcNAc...) asparagine glycosylation sites follow: N156, N433, N443, N553, N599, N631, and N677.

Belongs to the BRINP family. In terms of tissue distribution, highly expressed in brain. Weakly expressed in heart, lung, skeletal muscle, kidney, thymus, prostate, testis and small intestine.

It is found in the cytoplasm. Functionally, plays a role in neurogenesis and brain development. May suppress cell cycle progression in postmitotic neurons by inhibiting G1/S transition. The sequence is that of BMP/retinoic acid-inducible neural-specific protein 1 (BRINP1) from Homo sapiens (Human).